A 252-amino-acid chain; its full sequence is Transcriptional regulatory protein HptR (252 aa).

A Response regulatory domain is found at 3-118 (KVVICDDERI…QLEVILGRLV (116 aa)). 4-aspartylphosphate is present on Asp-55. The HTH araC/xylS-type domain maps to 153 to 250 (NQIVDQIKQS…QMSPSDYCKQ (98 aa)). 2 DNA-binding regions (H-T-H motif) span residues 170–191 (SDLIQHIDVSESYAMRTFKDHV) and 217–240 (HYEIADKVGFSEYKMFSYHFKKYL).

Phosphorylated by HptS.

The protein resides in the cytoplasm. Functionally, member of the two-component regulatory system HptS/HptR that regulates genes involved in hexose phosphate transport system in response to changes in extracellular phosphate sources. Activates uhpT expression to facilitate glucose-6-phosphate/G6P utilization by directly binding to its promoter. Antagonizes CcpA-dependent transcription of a subset of CcpA-regulated genes involved in antibiotic susceptibility. In Staphylococcus aureus (strain MRSA252), this protein is Transcriptional regulatory protein HptR (hptR).